The primary structure comprises 466 residues: Cysteine--tRNA ligase (466 aa).

Cys28 is a Zn(2+) binding site. The 'HIGH' region signature appears at 30–40 (PTVYNYIHIGN). Cys208, His233, and Glu237 together coordinate Zn(2+). Residues 265–269 (KMSKS) carry the 'KMSKS' region motif. An ATP-binding site is contributed by Lys268.

The protein belongs to the class-I aminoacyl-tRNA synthetase family. Monomer. The cofactor is Zn(2+).

The protein localises to the cytoplasm. The enzyme catalyses tRNA(Cys) + L-cysteine + ATP = L-cysteinyl-tRNA(Cys) + AMP + diphosphate. This chain is Cysteine--tRNA ligase, found in Staphylococcus epidermidis (strain ATCC 35984 / DSM 28319 / BCRC 17069 / CCUG 31568 / BM 3577 / RP62A).